We begin with the raw amino-acid sequence, 280 residues long: Acetyl-coenzyme A carboxylase carboxyl transferase subunit beta (280 aa).

A CoA carboxyltransferase N-terminal domain is found at 24–280 (AWIKCDKCKN…IYTLIRHTHG (257 aa)). Cysteine 28, cysteine 31, cysteine 47, and cysteine 50 together coordinate Zn(2+). The C4-type zinc-finger motif lies at 28-50 (CDKCKNILYIEDLLKNLKICPHC).

The protein belongs to the AccD/PCCB family. As to quaternary structure, acetyl-CoA carboxylase is a heterohexamer composed of biotin carboxyl carrier protein (AccB), biotin carboxylase (AccC) and two subunits each of ACCase subunit alpha (AccA) and ACCase subunit beta (AccD). The cofactor is Zn(2+).

The protein localises to the cytoplasm. The catalysed reaction is N(6)-carboxybiotinyl-L-lysyl-[protein] + acetyl-CoA = N(6)-biotinyl-L-lysyl-[protein] + malonyl-CoA. Its pathway is lipid metabolism; malonyl-CoA biosynthesis; malonyl-CoA from acetyl-CoA: step 1/1. Functionally, component of the acetyl coenzyme A carboxylase (ACC) complex. Biotin carboxylase (BC) catalyzes the carboxylation of biotin on its carrier protein (BCCP) and then the CO(2) group is transferred by the transcarboxylase to acetyl-CoA to form malonyl-CoA. The sequence is that of Acetyl-coenzyme A carboxylase carboxyl transferase subunit beta from Sulfurihydrogenibium sp. (strain YO3AOP1).